Here is a 676-residue protein sequence, read N- to C-terminus: Long-chain-fatty-acid--CoA ligase 1 (676 aa).

Tyr-246–Val-257 serves as a coordination point for ATP. Residues Asp-511 to Leu-560 carry the FACS motif.

Belongs to the ATP-dependent AMP-binding enzyme family. Requires Mg(2+) as cofactor.

The catalysed reaction is a long-chain fatty acid + ATP + CoA = a long-chain fatty acyl-CoA + AMP + diphosphate. Its function is as follows. Esterification, concomitant with transport, of exogenous long-chain fatty acids into metabolically active CoA thioesters for subsequent degradation or incorporation into phospholipids. It may supplement intracellular myristoyl-CoA pools from exogenous myristate. Preferentially acts on C12:0-C16:0 fatty acids with myristic and pentadecanic acid (C15:0) having the highest activities. Appears to play a role in the maintenance of cell viability during stationary phase. In Schizosaccharomyces pombe (strain 972 / ATCC 24843) (Fission yeast), this protein is Long-chain-fatty-acid--CoA ligase 1 (lcf1).